The sequence spans 458 residues: Sulfite efflux pump SSU1 (458 aa).

Topologically, residues 1-11 are cytoplasmic; the sequence is MVANWVLALTR. A helical transmembrane segment spans residues 12–32; that stretch reads QFDPFMFMMVMGVGISSNILY. Residues 33–48 are Extracellular-facing; that stretch reads SFPYPARWLRICSYIM. A helical membrane pass occupies residues 49–69; it reads FAIACLIFIAVQALQILHLIV. The Cytoplasmic portion of the chain corresponds to 70–89; sequence YIKEKSFREYFNDFFRNMKH. A helical transmembrane segment spans residues 90 to 110; sequence NLFWGTYPMGLVTIINFLGAL. Topologically, residues 111–135 are extracellular; it reads SKANTTKSPTNARNLMIFVYVLWWY. Residues 136–156 traverse the membrane as a helical segment; that stretch reads DLAVCLVIAWGISFLIWHDYY. Residues 157–176 lie on the Cytoplasmic side of the membrane; sequence PLEGIGNYPSYNIKMASENM. A helical membrane pass occupies residues 177 to 197; that stretch reads KSVLLLDIIPLVVVASSCGTF. At 198-220 the chain is on the extracellular side; it reads TMSEIFFHAFNRNIQLITLVICA. Residues 221-241 traverse the membrane as a helical segment; that stretch reads LTWLHAIIFVFILIAIYFWSL. At 242-252 the chain is on the cytoplasmic side; sequence YINKIPPMTQV. Residues 253-275 form a helical membrane-spanning segment; sequence FTLFLLLGPMGQGSFGVLLLTDN. The Extracellular portion of the chain corresponds to 276-309; it reads IKKYAGKYYPTDNITREQEILTIAVPWCFKILGM. A helical membrane pass occupies residues 310–330; it reads VSAMALLAMGYFFTVISVVSI. The Cytoplasmic portion of the chain corresponds to 331 to 350; sequence LSYYNKKEIENETGKVKRVY. A helical membrane pass occupies residues 351–371; that stretch reads TFHKGFWGMTFPMGTMSLGNE. Over 372–387 the chain is Extracellular; the sequence is ELYVQYNQYVPLYAFR. The helical transmembrane segment at 388–408 threads the bilayer; the sequence is VLGTIYGGVCVCWSILCLLCT. Over 409 to 458 the chain is Cytoplasmic; sequence LHEYSKKMLHAARKSSLFSESGTEKTTVSPYNSIESVEESNSALDFTRLA. Serine 444, serine 448, and serine 450 each carry phosphoserine.

The protein belongs to the tellurite-resistance/dicarboxylate transporter (TDT) family.

It is found in the cell membrane. Functionally, involved in efflux of free sulfite. Mutations in the SSU1 gene cause sensitivity to sulfite. This Saccharomyces cerevisiae (strain ATCC 204508 / S288c) (Baker's yeast) protein is Sulfite efflux pump SSU1 (SSU1).